Here is a 64-residue protein sequence, read N- to C-terminus: Alpha-conotoxin-like Lp1.7 (64 aa).

An N-terminal signal peptide occupies residues 1-21; the sequence is MGMRMMFTMFLLVVLTTTVVS. The propeptide occupies 22 to 41; sequence FNSDRESNHENRRTSNQITR. Cystine bridges form between C47-C53 and C48-C61. A lacks the Ser-Xaa-Pro motif that is crucial for potent interaction with nAChR region spans residues 49-51; it reads DDP.

Belongs to the conotoxin A superfamily. Expressed by the venom duct.

It localises to the secreted. Its function is as follows. Alpha-conotoxins act on postsynaptic membranes, they bind to the nicotinic acetylcholine receptors (nAChR) and thus inhibit them. Has possibly a distinct nAChR binding mode from other alpha-conotoxins, due to a different three residue motif (lacks the Ser-Xaa-Pro motif). This chain is Alpha-conotoxin-like Lp1.7, found in Conus leopardus (Leopard cone).